Reading from the N-terminus, the 299-residue chain is dTDP-4-dehydrorhamnose reductase (299 aa).

NADH is bound by residues 10–12 (GQV), aspartate 30, 39–40 (DF), and 63–65 (AHT). 11 to 12 (QV) provides a ligand contact to NADPH. Residues 39-40 (DF), 63-65 (AHT), and tyrosine 102 each bind NADPH. Position 104–105 (104–105 (TD)) interacts with dTDP-beta-L-rhamnose. Tyrosine 128 and lysine 132 together coordinate NADH. NADPH-binding residues include tyrosine 128 and lysine 132. Catalysis depends on tyrosine 128, which acts as the Proton donor/acceptor. Tryptophan 153 serves as a coordination point for dTDP-beta-L-rhamnose.

This sequence belongs to the dTDP-4-dehydrorhamnose reductase family. In terms of assembly, homodimer. Requires Mg(2+) as cofactor.

It carries out the reaction dTDP-beta-L-rhamnose + NADP(+) = dTDP-4-dehydro-beta-L-rhamnose + NADPH + H(+). Its pathway is carbohydrate biosynthesis; dTDP-L-rhamnose biosynthesis. It participates in bacterial outer membrane biogenesis; LPS O-antigen biosynthesis. Its function is as follows. Involved in the biosynthesis of the dTDP-L-rhamnose which is an important component of lipopolysaccharide (LPS). Catalyzes the reduction of dTDP-6-deoxy-L-lyxo-4-hexulose to yield dTDP-L-rhamnose. RmlD uses NADH and NADPH nearly equally well. This chain is dTDP-4-dehydrorhamnose reductase, found in Shigella flexneri.